The following is a 296-amino-acid chain: GTP cyclohydrolase FolE2 (296 aa).

This sequence belongs to the GTP cyclohydrolase IV family.

It catalyses the reaction GTP + H2O = 7,8-dihydroneopterin 3'-triphosphate + formate + H(+). It functions in the pathway cofactor biosynthesis; 7,8-dihydroneopterin triphosphate biosynthesis; 7,8-dihydroneopterin triphosphate from GTP: step 1/1. Its function is as follows. Converts GTP to 7,8-dihydroneopterin triphosphate. The protein is GTP cyclohydrolase FolE2 of Ectopseudomonas mendocina (strain ymp) (Pseudomonas mendocina).